The following is a 1177-amino-acid chain: Transcription-repair-coupling factor (1177 aa).

The Helicase ATP-binding domain maps to Asp-638–Ile-799. Gly-651–Thr-658 is a binding site for ATP. A DEEQ box motif is present at residues Asp-752–Gln-755. The 155-residue stretch at Leu-820 to Thr-974 folds into the Helicase C-terminal domain.

It in the N-terminal section; belongs to the UvrB family. This sequence in the C-terminal section; belongs to the helicase family. RecG subfamily.

It is found in the cytoplasm. In terms of biological role, couples transcription and DNA repair by recognizing RNA polymerase (RNAP) stalled at DNA lesions. Mediates ATP-dependent release of RNAP and its truncated transcript from the DNA, and recruitment of nucleotide excision repair machinery to the damaged site. Probably required to repair non-bulky DNA lesions. This Bacillus subtilis (strain 168) protein is Transcription-repair-coupling factor.